A 468-amino-acid chain; its full sequence is Chromosomal replication initiator protein DnaA (468 aa).

The domain I, interacts with DnaA modulators stretch occupies residues 1-84 (MSSSLWLQCL…RFEVGSRPVS (84 aa)). A disordered region spans residues 80 to 106 (SRPVSAPKPAPTRTPADVAAESSAPAQ). A domain II region spans residues 84 to 131 (SAPKPAPTRTPADVAAESSAPAQLQARKPVHKTWDDDPQAIAAINHRS). The interval 132–348 (NMNPKHKFDN…GALNRVIANA (217 aa)) is domain III, AAA+ region. Residues Gly176, Gly178, Lys179, and Thr180 each contribute to the ATP site. Residues 349 to 468 (NFTGRPITID…YSNLIRTLSS (120 aa)) are domain IV, binds dsDNA.

The protein belongs to the DnaA family. Oligomerizes as a right-handed, spiral filament on DNA at oriC.

It is found in the cytoplasm. In terms of biological role, plays an essential role in the initiation and regulation of chromosomal replication. ATP-DnaA binds to the origin of replication (oriC) to initiate formation of the DNA replication initiation complex once per cell cycle. Binds the DnaA box (a 9 base pair repeat at the origin) and separates the double-stranded (ds)DNA. Forms a right-handed helical filament on oriC DNA; dsDNA binds to the exterior of the filament while single-stranded (ss)DNA is stabiized in the filament's interior. The ATP-DnaA-oriC complex binds and stabilizes one strand of the AT-rich DNA unwinding element (DUE), permitting loading of DNA polymerase. After initiation quickly degrades to an ADP-DnaA complex that is not apt for DNA replication. Binds acidic phospholipids. The chain is Chromosomal replication initiator protein DnaA from Vibrio parahaemolyticus serotype O3:K6 (strain RIMD 2210633).